A 432-amino-acid polypeptide reads, in one-letter code: Adenosylhomocysteinase (432 aa).

S2 bears the N-acetylserine mark. Substrate is bound by residues T57, D131, and E156. Position 183 is a phosphoserine (S183). The segment at 183 to 350 (SVTKSKFDNL…EGRLVNLGCA (168 aa)) is NAD binding. K186 and D190 together coordinate substrate. An N6-(2-hydroxyisobutyryl)lysine modification is found at K186. Residue Y193 is modified to Phosphotyrosine.

It belongs to the adenosylhomocysteinase family. As to quaternary structure, homotetramer. Interaction with AHCYL1. The cofactor is NAD(+).

It localises to the cytoplasm. It is found in the melanosome. Its subcellular location is the nucleus. The protein resides in the endoplasmic reticulum. The catalysed reaction is S-adenosyl-L-homocysteine + H2O = L-homocysteine + adenosine. Its pathway is amino-acid biosynthesis; L-homocysteine biosynthesis; L-homocysteine from S-adenosyl-L-homocysteine: step 1/1. Catalyzes the hydrolysis of S-adenosyl-L-homocysteine to form adenosine and homocysteine. Binds copper ions. This is Adenosylhomocysteinase (AHCY) from Sus scrofa (Pig).